We begin with the raw amino-acid sequence, 95 residues long: Protein TusB (95 aa).

It belongs to the DsrH/TusB family. In terms of assembly, heterohexamer, formed by a dimer of trimers. The hexameric TusBCD complex contains 2 copies each of TusB, TusC and TusD. The TusBCD complex interacts with TusE.

Its subcellular location is the cytoplasm. In terms of biological role, part of a sulfur-relay system required for 2-thiolation of 5-methylaminomethyl-2-thiouridine (mnm(5)s(2)U) at tRNA wobble positions. The chain is Protein TusB from Buchnera aphidicola subsp. Acyrthosiphon pisum (strain 5A).